A 355-amino-acid chain; its full sequence is Tabersonine 16-O-methyltransferase (355 aa).

S-adenosyl-L-methionine-binding positions include 198–201, aspartate 222, 222–223, 242–243, and lysine 256; these read IGGG, DL, and DM. Histidine 260 serves as the catalytic Proton acceptor.

It belongs to the class I-like SAM-binding methyltransferase superfamily. Cation-independent O-methyltransferase family. COMT subfamily. Homodimer. Expressed in leaves and flowers. Detected in stems and roots. In leaves, expressed in epidermal cells.

It is found in the cytoplasm. It carries out the reaction 16-hydroxytabersonine + S-adenosyl-L-methionine = 16-methoxytabersonine + S-adenosyl-L-homocysteine + H(+). It participates in alkaloid biosynthesis; vindoline biosynthesis. Its function is as follows. 16-O-methyltransferase involved in the biosynthesis of vindoline. Highly specific for 16-hydroxytabersonine. No activity with tabersonine, 3-hydroxytyramine, 4-hydroxytyramine, 5-hydroxytryptamine (5HT), 2,3-dihydro-3-hydroxytabersonine, lochnericine, hoerhammericine, 16-hydroxy-2,3-dihydro-3-hydroxytabersonine, 16-hydroxylochnericine, 16-hydroxyhoerhammericine, quercetin, kaempferol and caffeic acid as substrates. The polypeptide is Tabersonine 16-O-methyltransferase (Catharanthus roseus (Madagascar periwinkle)).